The primary structure comprises 500 residues: Probable cytosol aminopeptidase 1 (500 aa).

Positions 263 and 268 each coordinate Mn(2+). Lysine 275 is a catalytic residue. Aspartate 287, aspartate 346, and glutamate 348 together coordinate Mn(2+). Arginine 350 is an active-site residue.

It belongs to the peptidase M17 family. Mn(2+) is required as a cofactor.

It is found in the cytoplasm. It catalyses the reaction Release of an N-terminal amino acid, Xaa-|-Yaa-, in which Xaa is preferably Leu, but may be other amino acids including Pro although not Arg or Lys, and Yaa may be Pro. Amino acid amides and methyl esters are also readily hydrolyzed, but rates on arylamides are exceedingly low.. The catalysed reaction is Release of an N-terminal amino acid, preferentially leucine, but not glutamic or aspartic acids.. Functionally, presumably involved in the processing and regular turnover of intracellular proteins. Catalyzes the removal of unsubstituted N-terminal amino acids from various peptides. The protein is Probable cytosol aminopeptidase 1 (pepA1) of Shewanella oneidensis (strain ATCC 700550 / JCM 31522 / CIP 106686 / LMG 19005 / NCIMB 14063 / MR-1).